Reading from the N-terminus, the 104-residue chain is L-rhamnose mutarotase (104 aa).

Position 18 (tyrosine 18) interacts with substrate. Histidine 22 acts as the Proton donor in catalysis. Substrate contacts are provided by residues tyrosine 41 and 76-77; that span reads WW.

This sequence belongs to the rhamnose mutarotase family. Homodimer.

The protein localises to the cytoplasm. It carries out the reaction alpha-L-rhamnose = beta-L-rhamnose. Its pathway is carbohydrate metabolism; L-rhamnose metabolism. In terms of biological role, involved in the anomeric conversion of L-rhamnose. In Enterobacter sp. (strain 638), this protein is L-rhamnose mutarotase.